A 306-amino-acid chain; its full sequence is Non-specific ribonucleoside hydrolase RihC (306 aa).

His235 is a catalytic residue.

Belongs to the IUNH family. RihC subfamily.

In terms of biological role, hydrolyzes both purine and pyrimidine ribonucleosides with a broad-substrate specificity. This Salmonella enteritidis PT4 (strain P125109) protein is Non-specific ribonucleoside hydrolase RihC.